A 360-amino-acid chain; its full sequence is DNA replication and repair protein RecF (360 aa).

An ATP-binding site is contributed by 30 to 37; sequence GQNGSGKT.

It belongs to the RecF family.

The protein localises to the cytoplasm. Functionally, the RecF protein is involved in DNA metabolism; it is required for DNA replication and normal SOS inducibility. RecF binds preferentially to single-stranded, linear DNA. It also seems to bind ATP. In Shewanella loihica (strain ATCC BAA-1088 / PV-4), this protein is DNA replication and repair protein RecF.